Reading from the N-terminus, the 244-residue chain is uncharacterized protein (244 aa).

2 stretches are compositionally biased toward basic and acidic residues: residues 1–10 (MNDPFARMET) and 100–127 (GTRG…HGEE). 3 disordered regions span residues 1 to 79 (MNDP…GEEL), 100 to 130 (GTRG…EPNY), and 219 to 244 (TGAS…EIKL).

This is an uncharacterized protein from Homo sapiens (Human).